A 121-amino-acid polypeptide reads, in one-letter code: NADH-ubiquinone oxidoreductase chain 3 (121 aa).

Transmembrane regions (helical) follow at residues 11–31 (ILIF…LSYF), 63–83 (FYLV…LFPW), and 90–110 (ISII…IGFI).

This sequence belongs to the complex I subunit 3 family.

The protein resides in the mitochondrion membrane. The enzyme catalyses a ubiquinone + NADH + 5 H(+)(in) = a ubiquinol + NAD(+) + 4 H(+)(out). In terms of biological role, core subunit of the mitochondrial membrane respiratory chain NADH dehydrogenase (Complex I) that is believed to belong to the minimal assembly required for catalysis. Complex I functions in the transfer of electrons from NADH to the respiratory chain. The immediate electron acceptor for the enzyme is believed to be ubiquinone. In Chondrus crispus (Carrageen Irish moss), this protein is NADH-ubiquinone oxidoreductase chain 3 (ND3).